The chain runs to 414 residues: Multifunctional CCA protein (414 aa).

Residues glycine 8 and arginine 11 each contribute to the ATP site. CTP is bound by residues glycine 8 and arginine 11. Residues aspartate 21 and aspartate 23 each contribute to the Mg(2+) site. 3 residues coordinate ATP: arginine 91, arginine 143, and arginine 146. Residues arginine 91, arginine 143, and arginine 146 each coordinate CTP. One can recognise an HD domain in the interval 232 to 333 (TGVHVMMVID…TRLVERCDAL (102 aa)).

This sequence belongs to the tRNA nucleotidyltransferase/poly(A) polymerase family. Bacterial CCA-adding enzyme type 1 subfamily. In terms of assembly, monomer. Can also form homodimers and oligomers. Mg(2+) serves as cofactor. Ni(2+) is required as a cofactor.

The enzyme catalyses a tRNA precursor + 2 CTP + ATP = a tRNA with a 3' CCA end + 3 diphosphate. It catalyses the reaction a tRNA with a 3' CCA end + 2 CTP + ATP = a tRNA with a 3' CCACCA end + 3 diphosphate. In terms of biological role, catalyzes the addition and repair of the essential 3'-terminal CCA sequence in tRNAs without using a nucleic acid template. Adds these three nucleotides in the order of C, C, and A to the tRNA nucleotide-73, using CTP and ATP as substrates and producing inorganic pyrophosphate. tRNA 3'-terminal CCA addition is required both for tRNA processing and repair. Also involved in tRNA surveillance by mediating tandem CCA addition to generate a CCACCA at the 3' terminus of unstable tRNAs. While stable tRNAs receive only 3'-terminal CCA, unstable tRNAs are marked with CCACCA and rapidly degraded. This is Multifunctional CCA protein from Cupriavidus metallidurans (strain ATCC 43123 / DSM 2839 / NBRC 102507 / CH34) (Ralstonia metallidurans).